The chain runs to 517 residues: NADH-quinone oxidoreductase subunit N (517 aa).

The next 14 helical transmembrane spans lie at 14–34 (LAPT…EAFV), 40–60 (HMVQ…MVVV), 77–97 (GPAL…LLLI), 131–151 (ATEV…FVAA), 154–174 (LLTM…LCAL), 189–209 (YFLL…LVYG), 238–258 (VLLF…AAAA), 272–292 (PTPI…GALL), 306–326 (FTPI…VLAV), 334–354 (LLAY…LAPS), 362–382 (MFYL…VTLV), 404–424 (FYAG…LTSG), 451–471 (SMVL…SEPG), and 481–501 (GWLT…LGVV).

Belongs to the complex I subunit 2 family. As to quaternary structure, NDH-1 is composed of 14 different subunits. Subunits NuoA, H, J, K, L, M, N constitute the membrane sector of the complex.

It localises to the cell membrane. The enzyme catalyses a quinone + NADH + 5 H(+)(in) = a quinol + NAD(+) + 4 H(+)(out). In terms of biological role, NDH-1 shuttles electrons from NADH, via FMN and iron-sulfur (Fe-S) centers, to quinones in the respiratory chain. The immediate electron acceptor for the enzyme in this species is believed to be a menaquinone. Couples the redox reaction to proton translocation (for every two electrons transferred, four hydrogen ions are translocated across the cytoplasmic membrane), and thus conserves the redox energy in a proton gradient. This is NADH-quinone oxidoreductase subunit N from Salinispora arenicola (strain CNS-205).